Reading from the N-terminus, the 2006-residue chain is MNDLRQQQMVAATSSSGSESGTAVESAAATSTAGSAGAAGRPQSNCSANSNAKSVAASSTSEEEQRVSSTSSPAQRDQQLNADRDREQEPEPQQQQQREEALQHQHNQPGHITSTTASPPPTLPPPTTPCDDAPSTTGASASASSASGEAPSAASAAGAAGGPMAATALEVESEERDGHKIILKLSKHANPNSNANESQPGGDERRVEPLRIQLPCGGAEGGLVAKQQDAFDADASSCSSSCAEDEVATTLGQQLRNTPHIVPKLTIRAANERRVGSVVPKLTIKLPENPAASGSNSNSGSCSAAVSGAQSAMPAKNDAHLSSLSPASASSSSASSSSSSSSSSSLAEMQTVPKLMIKTTLAGSSCISSSEELPQQQQQIPKLTIKTGGGGQEHVHTVIMTHDLNNAQSIPKLTIKTKSIEMIEDEQAAKLEQQLQPLPKLTIKNLCSPKHKVRAVLEEKPPTAASKLAIPKPTPNPTPAPMTNGGESNSSSQEFCGFSDPDADIAAPASDDVRRNSDDMVIDDSLSKEHDPKIFHNLPPMPASNGIASGGSKASKASKSAQSQHNVVDMVDLTSSPSPGSSPTHVPNNFTGRISPKGLLIDCLRMQTAIGCYVPEEADSRVRPAASPNSNILLSQLTAPAKSFTTTTPKSKSSKYPQLTERLMANGSGTGGGSVIAAESEAVVGPLPAANPAQSIIESIEILDTPDGSPRVAYMDEDSNPMLNKHLQTIHKLAMDHGVEQRMDTQDNNNENHLKRTNSEGNESPSSRLPPSKQRRLDNDENDQQTQNCHDPARKCSESLQALPPSHRSRKQKHERILNTDLEGSLFPPTQQQSISTPDQNGALSSEVEGEDAKAQDPLEPATPQPPPVATPAGTGKKRGRPKRIQNQSSPDGGGAVTPKPGTPQEEANSAVKSRRVQLLRKRLAIDMVSVGQEQADMKAKEKESSVGVPNARVEDGLAETLESPKTRDHRPLRATRRTTTSTNTNLQPTPKSTRKRQSKASVQQSQLPPPTMAQFGSSESESNNNNNSSISFALSAQIDLTMCSSSSSTSSGAAANQQVIGGSGSSSMLPPTTILSSSDPLPDVIFQPNDFSSIMATQQLRSSRPSSISCGSTGGSQPDCHDEDNYTSALDNSGDETALPMPPTRGRGRGRRSRGGRGRGSSSVDRAVSVGGTASTTPATQPRAPRMSRGASAVAKAIAMSRPRCVGGLKHQPDPERLKGLFSPSPQVFEEDTRMSADLSNSNQSMASLMEPPLTPQKQPDFLNNEESQSSMVSNVSMMDSNQGQSADAILGSALKRPKKKKMETCVAEDTDYSASSIAEYDWPPPKGCCPSKNRDTFMIQEQVALYLGITSFKRKYPDLPRRSVDMEERNWLQEKGLVSEKLCDLGITAVWASDILDIMYADFFDKYEEYKEYIRRKHLREIEAKQKALGLTVGAGRGLQARDRAMLSATKWNAYFNKSRKDERQSCMDLQTFTINQPQPRTAPTCTRLERSTSDLIRAVAEEANIPAPPNLLPPRDYDEAFRNSDYAYPLTVVPDQFSMAYRQFEPAELRAYPLDTALDKPPTDLMAQLLQAKSEAVGSDEIKTSAPAPKDLGQEQSAIKSVTVTAPVRRSRRSTRQQTDKVRTASSSSTSSAQSVSSASSGNGSSSDTESGDESDFSSTSSCSSSTGASSGAGSEDEDGNECSSSVRLSTCGVCLRSQHRNARDMPEAFIRCYTCRKRVHPSCVDMPPRMVGRVRNYNWQCAGCKCCIKCRSSQRPGKMLYCEQCDRGYHIYCLGLRTVPDGRWSCERCCFCMRCGATKPEGLPQVAALSQASGGPSANGDRSKAARNKRLKWVHEYRIDHVTKIREHAAMFCVPCARNKPAKRQSAAGAAGAAAVTPVLEATSAQTDDSPMPSPGLTTNGGRALSPTAALSPKAAVPVASLPPVLEATTVTTNIAGTIGRRQAGNAVNITTMQCSSSSSSNFSGNGVTEDAANVTATGTATAAAGAPAATPIGIAPPPVVA.

Disordered regions lie at residues 1 to 208 (MNDL…RRVE), 313 to 347 (MPAK…SSLA), 458 to 564 (EEKP…AQSQ), 744 to 794 (DTQD…DPAR), 821 to 916 (DLEG…KSRR), 929 to 1029 (VSVG…NNNS), 1044 to 1082 (CSSS…SDPL), and 1099 to 1196 (QQLR…SAVA). Over residues 10–60 (VAATSSSGSESGTAVESAAATSTAGSAGAAGRPQSNCSANSNAKSVAASST) the composition is skewed to low complexity. The span at 67-81 (VSSTSSPAQRDQQLN) shows a compositional bias: polar residues. Residues 118 to 128 (SPPPTLPPPTT) are compositionally biased toward pro residues. Residues 129-168 (PCDDAPSTTGASASASSASGEAPSAASAAGAAGGPMAATA) are compositionally biased toward low complexity. Polar residues predominate over residues 189–199 (ANPNSNANESQ). Over residues 321 to 347 (LSSLSPASASSSSASSSSSSSSSSSLA) the composition is skewed to low complexity. Over residues 485–494 (GGESNSSSQE) the composition is skewed to polar residues. The span at 525–534 (SLSKEHDPKI) shows a compositional bias: basic and acidic residues. Residues 543 to 563 (ASNGIASGGSKASKASKSAQS) are compositionally biased toward low complexity. Residues 744–758 (DTQDNNNENHLKRTN) are compositionally biased toward basic and acidic residues. Polar residues-rich tracts occupy residues 759-769 (SEGNESPSSRL) and 828-844 (PPTQ…NGAL). Over residues 861 to 870 (PATPQPPPVA) the composition is skewed to pro residues. Basic and acidic residues-rich tracts occupy residues 936-945 (ADMKAKEKES) and 963-972 (ESPKTRDHRP). Composition is skewed to low complexity over residues 978-990 (RTTT…LQPT) and 1018-1029 (SSESESNNNNNS). Residues 1053–1080 (GAAANQQVIGGSGSSSMLPPTTILSSSD) show a composition bias toward polar residues. Residues 1103-1112 (SSRPSSISCG) are compositionally biased toward low complexity. Residues 1147 to 1158 (GRGRGRRSRGGR) are compositionally biased toward basic residues. The segment covering 1161–1173 (GSSSVDRAVSVGG) has biased composition (low complexity). Residues 1340–1573 (MIQEQVALYL…PPTDLMAQLL (234 aa)) are SAY. The interval 1579-1685 (AVGSDEIKTS…AGSEDEDGNE (107 aa)) is disordered. Low complexity-rich tracts occupy residues 1627–1652 (TASS…SSDT) and 1660–1677 (FSST…SGAG). A PHD-type 1; degenerate zinc finger spans residues 1694-1751 (TCGVCLRSQHRNARDMPEAFIRCYTCRKRVHPSCVDMPPRMVGRVRNYNWQCAGCKCC). The PHD-type 2; degenerate zinc-finger motif lies at 1753–1796 (KCRSSQRPGKMLYCEQCDRGYHIYCLGLRTVPDGRWSCERCCFC). The tract at residues 1887-1911 (TSAQTDDSPMPSPGLTTNGGRALSP) is disordered.

The protein belongs to the SAYP family. Widely expressed. Highly expressed in ovary. Expressed in nursing cells and growing oocytes at all stages of development and accumulates in mature oocytes. Expressed in the nuclei of syncytium blastoderm of early embryos and in the nuclei of different tissues of late embryos, larvae, and adults.

The protein localises to the nucleus. It localises to the cytoplasm. Its subcellular location is the chromosome. In terms of biological role, essential transcription regulator during early development. Coactivates transcription of some euchromatin genes and repress transcription in of euchromatin genes translocated to heterochromatin. This Drosophila melanogaster (Fruit fly) protein is Supporter of activation of yellow protein (e(y)3).